The primary structure comprises 1388 residues: Kinesin-like protein KIF15 (1388 aa).

The interval 1–25 (MAPGCKTELRSVTNGQSNQPSNEGD) is disordered. The span at 10–22 (RSVTNGQSNQPSN) shows a compositional bias: polar residues. Residues 26–363 (AIKVFVRIRP…LNFAQRAKLI (338 aa)) enclose the Kinesin motor domain. Residue 109–116 (GQTGSGKT) participates in ATP binding. Residues 368 to 1388 (VVNEDTQGNV…FLKEKKRSES (1021 aa)) are a coiled coil. Threonine 399 carries the phosphothreonine modification. Serine 568 is subject to Phosphoserine. Residue lysine 1009 is modified to N6-acetyllysine. 2 positions are modified to phosphoserine: serine 1141 and serine 1169. The disordered stretch occupies residues 1228 to 1250 (QKENSDQNHPDNQQLKNEQEESI).

This sequence belongs to the TRAFAC class myosin-kinesin ATPase superfamily. Kinesin family. KLP2 subfamily. As to quaternary structure, interacts with MKI67 and TPX2. As to expression, expressed in testis, colon, thymus and in breast cancer.

Its subcellular location is the cytoplasm. The protein resides in the cytoskeleton. The protein localises to the spindle. Its function is as follows. Plus-end directed kinesin-like motor enzyme involved in mitotic spindle assembly. The sequence is that of Kinesin-like protein KIF15 (KIF15) from Homo sapiens (Human).